The primary structure comprises 468 residues: Glutamate--tRNA ligase (468 aa).

Residues 9–19 (PSPTGSIHIGN) carry the 'HIGH' region motif. Residues 239 to 243 (KLSKR) carry the 'KMSKS' region motif. Lys-242 is an ATP binding site.

It belongs to the class-I aminoacyl-tRNA synthetase family. Glutamate--tRNA ligase type 1 subfamily. As to quaternary structure, monomer.

Its subcellular location is the cytoplasm. It catalyses the reaction tRNA(Glu) + L-glutamate + ATP = L-glutamyl-tRNA(Glu) + AMP + diphosphate. In terms of biological role, catalyzes the attachment of glutamate to tRNA(Glu) in a two-step reaction: glutamate is first activated by ATP to form Glu-AMP and then transferred to the acceptor end of tRNA(Glu). The chain is Glutamate--tRNA ligase from Blochmanniella pennsylvanica (strain BPEN).